Consider the following 436-residue polypeptide: Drebrin-like protein (436 aa).

An ADF-H domain is found at 2–133; it reads AVNLSRNGPA…EPECIMEKVA (132 aa). Position 26 is a phosphothreonine (threonine 26). Phosphoserine is present on serine 160. Lysine 176 is modified (N6-acetyllysine). Residues 179–233 are a coiled coil; it reads FWAKAEKEEENRRLEEKRRAEEERQRLEEERRERELQEAARREQRYQEQHRSAGA. 2 stretches are compositionally biased toward basic and acidic residues: residues 185 to 229 and 264 to 275; these read KEEE…EQHR and HPREIFKQKERA. The tract at residues 185–341 is disordered; the sequence is KEEENRRLEE…AQTEEEPTYE (157 aa). The span at 276–286 shows a compositional bias: polar residues; it reads MSTTSVTSSQP. 4 positions are modified to phosphoserine: serine 277, serine 280, serine 283, and serine 291. Residues 294–303 are compositionally biased toward polar residues; sequence LQKQLTQPET. Lysine 296 is subject to N6-acetyllysine. Residue threonine 299 is modified to Phosphothreonine. Phosphotyrosine is present on residues tyrosine 340 and tyrosine 350. The SH3 domain maps to 377-436; sequence GQGLCARALYDYQAADDTEISFDPENLITGIEVIDEGWWRGYGPDGHFGMFPANYVELIE.

It belongs to the ABP1 family. In terms of assembly, interacts with SHANK3, SYN1 and PRAM1. Interacts with SHANK2. Interacts with FGD1, DNM1 and MAP4K1. Interacts with ANKRD54. Interacts with COBL. Interacts with WASL and WIPF1. As to expression, detected in hippocampus neurons and in the Purkinje cell layer in cerebellum (at protein level). Predominantly expressed in brain, thymus and spleen. Also found in testis, heart and lung. Little or no expression detected in ovary or muscle.

It is found in the cytoplasm. The protein localises to the cytoskeleton. Its subcellular location is the cell projection. It localises to the lamellipodium. The protein resides in the ruffle. It is found in the cell cortex. The protein localises to the cytosol. Its subcellular location is the synapse. It localises to the perikaryon. The protein resides in the neuron projection. It is found in the cell membrane. The protein localises to the cytoplasmic vesicle. Its subcellular location is the clathrin-coated vesicle membrane. It localises to the golgi apparatus membrane. The protein resides in the podosome. It is found in the early endosome. The protein localises to the dendrite. Its subcellular location is the postsynaptic density. Its function is as follows. Adapter protein that binds F-actin and DNM1, and thereby plays a role in receptor-mediated endocytosis. Plays a role in the reorganization of the actin cytoskeleton, formation of cell projections, such as neurites, in neuron morphogenesis and synapse formation via its interaction with WASL and COBL. Does not bind G-actin and promote actin polymerization by itself. Required for the formation of organized podosome rosettes. May act as a common effector of antigen receptor-signaling pathways in leukocytes. Acts as a key component of the immunological synapse that regulates T-cell activation by bridging TCRs and the actin cytoskeleton to gene activation and endocytic processes. The polypeptide is Drebrin-like protein (Mus musculus (Mouse)).